Here is a 118-residue protein sequence, read N- to C-terminus: Large ribosomal subunit protein bL17 (118 aa).

The protein belongs to the bacterial ribosomal protein bL17 family. In terms of assembly, part of the 50S ribosomal subunit. Contacts protein L32.

This is Large ribosomal subunit protein bL17 from Hydrogenobaculum sp. (strain Y04AAS1).